Consider the following 317-residue polypeptide: Ferrochelatase (317 aa).

2 residues coordinate Fe cation: His-191 and Glu-271.

The protein belongs to the ferrochelatase family.

It localises to the cytoplasm. It carries out the reaction heme b + 2 H(+) = protoporphyrin IX + Fe(2+). Its pathway is porphyrin-containing compound metabolism; protoheme biosynthesis; protoheme from protoporphyrin-IX: step 1/1. Catalyzes the ferrous insertion into protoporphyrin IX. This Thermus thermophilus (strain ATCC BAA-163 / DSM 7039 / HB27) protein is Ferrochelatase.